Reading from the N-terminus, the 831-residue chain is Periplasmic nitrate reductase (831 aa).

A signal peptide (tat-type signal) is located at residues 1–29; the sequence is MTLSRRDFIKQTAVAATASVAGVTLPAGA. The 4Fe-4S Mo/W bis-MGD-type domain occupies 41–97; that stretch reads LKWSKAPCRFCGTGCGVTVAVRDNKVVATNGDPQAEVNKGLNCVKGYFLSKIMYGQD. [4Fe-4S] cluster-binding residues include Cys-48, Cys-51, Cys-55, and Cys-83. Mo-bis(molybdopterin guanine dinucleotide) is bound by residues Lys-85, Gln-152, Asn-177, Cys-181, 214 to 221, 245 to 249, 264 to 266, Met-375, Gln-379, Asn-485, 511 to 512, Lys-534, Asp-561, and 721 to 730; these read WGSNMAEM, STFTH, QTD, SD, and TGRVLEHWHS. Trp-797 provides a ligand contact to substrate. Mo-bis(molybdopterin guanine dinucleotide) contacts are provided by Asn-805 and Lys-822.

This sequence belongs to the prokaryotic molybdopterin-containing oxidoreductase family. NasA/NapA/NarB subfamily. As to quaternary structure, component of the periplasmic nitrate reductase NapAB complex composed of NapA and NapB. The cofactor is [4Fe-4S] cluster. Mo-bis(molybdopterin guanine dinucleotide) is required as a cofactor. In terms of processing, predicted to be exported by the Tat system. The position of the signal peptide cleavage has not been experimentally proven.

The protein localises to the periplasm. It catalyses the reaction 2 Fe(II)-[cytochrome] + nitrate + 2 H(+) = 2 Fe(III)-[cytochrome] + nitrite + H2O. Functionally, catalytic subunit of the periplasmic nitrate reductase complex NapAB. Receives electrons from NapB and catalyzes the reduction of nitrate to nitrite. The chain is Periplasmic nitrate reductase from Cupriavidus taiwanensis (strain DSM 17343 / BCRC 17206 / CCUG 44338 / CIP 107171 / LMG 19424 / R1) (Ralstonia taiwanensis (strain LMG 19424)).